Here is a 476-residue protein sequence, read N- to C-terminus: Probable cytosolic Fe-S cluster assembly factor GI11683 (476 aa).

Positions 23, 68, 71, 74, 187, 243, 395, and 399 each coordinate [4Fe-4S] cluster.

It belongs to the NARF family.

Component of the cytosolic iron-sulfur (Fe/S) protein assembly machinery. Required for maturation of extramitochondrial Fe/S proteins. In Drosophila mojavensis (Fruit fly), this protein is Probable cytosolic Fe-S cluster assembly factor GI11683.